The chain runs to 538 residues: Nicotinate phosphoribosyltransferase (538 aa).

Nicotinate is bound by residues tyrosine 21 and threonine 210. Position 213 is a phosphohistidine (histidine 213). Arginine 318 contacts nicotinate. Threonine 380 contributes to the 5-phospho-alpha-D-ribose 1-diphosphate binding site.

This sequence belongs to the NAPRTase family. Homodimer. Mg(2+) serves as cofactor. Requires Mn(2+) as cofactor. Transiently phosphorylated on a His residue during the reaction cycle. Phosphorylation strongly increases the affinity for substrates and increases the rate of nicotinate D-ribonucleotide production. Dephosphorylation regenerates the low-affinity form of the enzyme, leading to product release.

It localises to the cytoplasm. Its subcellular location is the cytosol. The enzyme catalyses nicotinate + 5-phospho-alpha-D-ribose 1-diphosphate + ATP + H2O = nicotinate beta-D-ribonucleotide + ADP + phosphate + diphosphate. It functions in the pathway cofactor biosynthesis; NAD(+) biosynthesis; nicotinate D-ribonucleotide from nicotinate: step 1/1. Functionally, catalyzes the first step in the biosynthesis of NAD from nicotinic acid, the ATP-dependent synthesis of beta-nicotinate D-ribonucleotide from nicotinate and 5-phospho-D-ribose 1-phosphate. Helps prevent cellular oxidative stress via its role in NAD biosynthesis. In Bos taurus (Bovine), this protein is Nicotinate phosphoribosyltransferase (NAPRT).